A 106-amino-acid chain; its full sequence is UPF0145 protein Csac_0771 (106 aa).

This sequence belongs to the UPF0145 family.

The sequence is that of UPF0145 protein Csac_0771 from Caldicellulosiruptor saccharolyticus (strain ATCC 43494 / DSM 8903 / Tp8T 6331).